The chain runs to 355 residues: Nuclear hormone receptor family member nhr-127 (355 aa).

The nuclear receptor DNA-binding region spans 10–86; sequence SIPCEVCKNQ…AGMKAEKIQK (77 aa). 2 NR C4-type zinc fingers span residues 13–33 and 49–69; these read CEVC…CGAC and CKDG…CRYC. The NR LBD domain maps to 126 to 355; the sequence is NPHNASEGCS…IVQIVQNNFY (230 aa).

It belongs to the nuclear hormone receptor family.

It localises to the nucleus. Orphan nuclear receptor. May play a role in modulation of lifespan and immunity. The polypeptide is Nuclear hormone receptor family member nhr-127 (nhr-127) (Caenorhabditis elegans).